The sequence spans 364 residues: MRTIDSSSKKDGFRMPGEFEKHAGCYIIWPERPDNWRLGAKPAQKAFVDVATAISRFEPVTVVASSSQYVNARYMLPDEIRVVEMDNDDAWVRDSGPTFVVNDSGDVRGVDWSFNSWGGLVDGLYFPWDKDDQVAQKICELERKDRYRLADFVLEGGSIHVDGEGTLVTTEECLLSEGRNPQLSKQQIEMVLKEYLNLEKIIWLKRGIYLDETNGHVDNIFNYVRPGVVALAWTDDETDPQYEISKECFDILSNETDAKGRKLEVHKINVPKPILITDEESKGVDAVEGTLPREEGDRLAASYINYYTANGGVVFPLFGDPNDELAREKLRQLYPNCEVVGVKAREILLGGGNIHCITQQVPRG.

Catalysis depends on Cys-356, which acts as the Amidino-cysteine intermediate.

This sequence belongs to the agmatine deiminase family.

It carries out the reaction agmatine + H2O = N-carbamoylputrescine + NH4(+). In Listeria monocytogenes serotype 4b (strain F2365), this protein is Putative agmatine deiminase 1.